Here is a 340-residue protein sequence, read N- to C-terminus: MLDIDKSTVDFLVTENMVQEVEKVLSHDVPLVHTIVEEMVKRDIDRIYFVACGSPLNAAQTAKHLADRFSDLQVYAISGWEFCDNTPYRLDARCAVIGVSDYGKTEEVIKALELGRACGALTAAFTKRADSPITSAAEFSIDYQADCIWEIHLLLCYSVVLEMITRLAPHAEIGKIKNDLKQLPNALGYLVRTWEEKGRQLGELASQWPMIYTVAAGPLRPLGYKEGIVTLMEFTWTHGCVIESGEFRHGPLEIVEPGVPFLFLLGNDESRHTTERAINFVKQRTDNVIVIDYAAISQGLHPWLAPFLMFVPMEWLCYYLSIYKDHNPDERRYYGGLVEY.

2 SIS domains span residues 35–169 (IVEE…RLAP) and 201–331 (LGEL…PDER).

Homododecamer.

The catalysed reaction is N(6)-(6-phospho-D-fructosyl)-L-lysine + H2O = D-glucose 6-phosphate + L-lysine. It participates in carbohydrate metabolism; fructoselysine degradation; D-glucose 6-phosphate and lysine from fructoselysine: step 2/2. Catalyzes the reversible conversion of fructoselysine 6-phosphate to glucose 6-phosphate and lysine. Functions in a fructoselysine degradation pathway that allows E.coli to grow on fructoselysine or psicoselysine. The polypeptide is Fructoselysine 6-phosphate deglycase (frlB) (Escherichia coli O157:H7).